The following is a 298-amino-acid chain: Protoheme IX farnesyltransferase (298 aa).

8 helical membrane-spanning segments follow: residues Ile-26–Pro-46, Leu-48–Ile-68, Phe-110–Phe-130, Ile-147–Gly-167, Val-174–Phe-194, Ile-220–Val-240, Leu-243–Leu-263, and Thr-276–Thr-296.

This sequence belongs to the UbiA prenyltransferase family. Protoheme IX farnesyltransferase subfamily. In terms of assembly, interacts with CtaA.

Its subcellular location is the cell membrane. The enzyme catalyses heme b + (2E,6E)-farnesyl diphosphate + H2O = Fe(II)-heme o + diphosphate. Its pathway is porphyrin-containing compound metabolism; heme O biosynthesis; heme O from protoheme: step 1/1. In terms of biological role, converts heme B (protoheme IX) to heme O by substitution of the vinyl group on carbon 2 of heme B porphyrin ring with a hydroxyethyl farnesyl side group. The polypeptide is Protoheme IX farnesyltransferase (Symbiobacterium thermophilum (strain DSM 24528 / JCM 14929 / IAM 14863 / T)).